The chain runs to 345 residues: Trace amine-associated receptor 6 (345 aa).

At methionine 1–arginine 32 the chain is on the extracellular side. Residue asparagine 17 is glycosylated (N-linked (GlcNAc...) asparagine). 2 disulfide bridges follow: cysteine 22–cysteine 186 and cysteine 105–cysteine 190. A helical transmembrane segment spans residues valine 33–valine 53. Residues methionine 54–asparagine 68 are Cytoplasmic-facing. Residues phenylalanine 69–serine 89 traverse the membrane as a helical segment. Topologically, residues methionine 90–phenylalanine 107 are extracellular. The helical transmembrane segment at histidine 108–isoleucine 128 threads the bilayer. Residues aspartate 129 to serine 147 lie on the Cytoplasmic side of the membrane. The helical transmembrane segment at valine 148 to phenylalanine 168 threads the bilayer. Residues tyrosine 169 to aspartate 202 are Extracellular-facing. The interval aspartate 174 to valine 187 is extracellular Loop 2 (ECL2). The helical transmembrane segment at phenylalanine 203–valine 223 threads the bilayer. The Cytoplasmic segment spans residues alanine 224–threonine 259. A helical transmembrane segment spans residues leucine 260–isoleucine 276. Residues aspartate 277–alanine 282 lie on the Extracellular side of the membrane. Residues phenylalanine 283–tyrosine 302 traverse the membrane as a helical segment. Residues asparagine 303–isoleucine 345 are Cytoplasmic-facing.

The protein belongs to the G-protein coupled receptor 1 family. As to expression, specifically expressed in neurons of the olfactory epithelium, to discrete glomeruli predominantly localized to a confined bulb region. Present in a ventral area of the main olfactory epithelium.

The protein resides in the cell membrane. Olfactory receptor specific for trace amines, such as beta-phenylethylamine (beta-PEA). Trace amine compounds are enriched in animal body fluids and act on trace amine-associated receptors (TAARs) to elicit both intraspecific and interspecific innate behaviors. Beta-PEA-binding causes a conformation change that triggers signaling via G(s)-class of G alpha proteins (GNAL or GNAS). The chain is Trace amine-associated receptor 6 from Mus musculus (Mouse).